The primary structure comprises 466 residues: Asparagine--tRNA ligase (466 aa).

It belongs to the class-II aminoacyl-tRNA synthetase family. In terms of assembly, homodimer.

It localises to the cytoplasm. It carries out the reaction tRNA(Asn) + L-asparagine + ATP = L-asparaginyl-tRNA(Asn) + AMP + diphosphate + H(+). In Salmonella choleraesuis (strain SC-B67), this protein is Asparagine--tRNA ligase.